The following is a 693-amino-acid chain: Transforming growth factor beta activator LRRC33 (693 aa).

The signal sequence occupies residues 1–19; sequence MEFPPLWLCLGFHFLIVEW. Residues 20-651 are Extracellular-facing; that stretch reads RSGPGTATAA…CKWEQVDTGL (632 aa). Positions 29-56 constitute an LRRNT domain; sequence ASQGGCKVVDGVADCRGLNLASVPSSLP. LRR repeat units lie at residues 58–79, 82–103, 106–127, 133–155, 158–179, 182–203, 206–227, 228–239, 251–272, and 273–294; these read HSRM…SLQA, RLEN…AFRE, HLRN…SAAA, GLRR…MLQN, SLEV…IFEG, HLVE…AFDG, ELRR…SLTQ, LRFLNVSYNILE, ELEI…PQCG, and KLHT…YNTS. N-linked (GlcNAc...) asparagine glycosylation is found at Asn74 and Asn85. Asn155 carries N-linked (GlcNAc...) asparagine glycosylation. The N-linked (GlcNAc...) asparagine glycan is linked to Asn232. N-linked (GlcNAc...) asparagine glycans are attached at residues Asn292, Asn309, and Asn312. LRR repeat units follow at residues 329-350, 353-374, 377-398, 403-424, 427-448, 463-484, 486-507, 512-533, 537-558, 559-580, and 585-605; these read ALRF…FLKK, SLSH…EHEP, ALTE…PGLT, NLRV…LFDN, SITT…VPVD, SLRS…PFQG, SLTH…SPLW, TLQV…MDFS, NLRA…KGSL, ALRT…VVSE, and GLQT…EGWG. 2 N-linked (GlcNAc...) asparagine glycosylation sites follow: Asn408 and Asn424. A glycan (N-linked (GlcNAc...) asparagine) is linked at Asn500. In terms of domain architecture, LRRCT spans 606-644; that stretch reads ALQQHFKTVADLSMVTCNLSSKIVRVVELPEGLPQGCKW. Asn623 is a glycosylation site (N-linked (GlcNAc...) asparagine). Residues 652–672 traverse the membrane as a helical segment; sequence FYLVLILPSCLTLLVACTVVF. At 673–693 the chain is on the cytoplasmic side; sequence LTFKKPLLQVIKSRCHWSSIY.

Belongs to the LRRC32/LRRC33 family. In terms of assembly, interacts with TGFB1; associates via disulfide bonds with the Latency-associated peptide chain (LAP) regulatory chain of TGFB1, leading to regulate activation of TGF-beta-1. Interacts (via LRR repeats) with TLR2, TLR3, TLR4, TLR9 and probably other Toll-like receptors. Interacts with CYBB/NOX2; the interaction is direct. In terms of processing, N-glycosylated. In terms of tissue distribution, mainly expressed in cells of hematopoietic origin, such as in immune organs such as lymph nodes, thymus and spleen. Among leukocytes, expressed at higher level in myeloid cell such as macrophages, neutrophils and dendritic cells. Highly expressed in central nervous system-resident macrophages, including microglia and perivascular macrophages.

Its subcellular location is the cell membrane. The protein localises to the endoplasmic reticulum membrane. In terms of biological role, key regulator of transforming growth factor beta-1 (TGFB1) specifically required for microglia function in the nervous system. Required for activation of latent TGF-beta-1 in macrophages and microglia: associates specifically via disulfide bonds with the Latency-associated peptide (LAP), which is the regulatory chain of TGFB1, and regulates integrin-dependent activation of TGF-beta-1. TGF-beta-1 activation mediated by LRRC33/NRROS is highly localized: there is little spreading of TGF-beta-1 activated from one microglial cell to neighboring microglia, suggesting the existence of localized and selective activation of TGF-beta-1 by LRRC33/NRROS. Indirectly plays a role in Toll-like receptor (TLR) signaling: ability to inhibit TLR-mediated NF-kappa-B activation and cytokine production is probably a consequence of its role in TGF-beta-1 signaling. The protein is Transforming growth factor beta activator LRRC33 of Mus musculus (Mouse).